The following is a 181-amino-acid chain: Adenylate kinase (181 aa).

An ATP-binding site is contributed by 10-15 (GAGKGT). The NMP stretch occupies residues 30-59 (STGELFRRNIEEGTKLGVEAKRYLDAGDLV). Residues T31, R36, 57–59 (DLV), 85–88 (GYPR), and Q92 each bind AMP. An LID region spans residues 126-132 (GRGRADD). R127 is an ATP binding site. Residues R129 and R140 each coordinate AMP. An ATP-binding site is contributed by G166.

The protein belongs to the adenylate kinase family. Monomer.

The protein localises to the cytoplasm. It carries out the reaction AMP + ATP = 2 ADP. It participates in purine metabolism; AMP biosynthesis via salvage pathway; AMP from ADP: step 1/1. Functionally, catalyzes the reversible transfer of the terminal phosphate group between ATP and AMP. Plays an important role in cellular energy homeostasis and in adenine nucleotide metabolism. The polypeptide is Adenylate kinase (Mycobacterium tuberculosis (strain ATCC 25177 / H37Ra)).